The chain runs to 518 residues: Light-independent protochlorophyllide reductase subunit B (518 aa).

D36 contributes to the [4Fe-4S] cluster binding site. The active-site Proton donor is D285. 420-421 serves as a coordination point for substrate; that stretch reads GL.

Belongs to the ChlB/BchB/BchZ family. Protochlorophyllide reductase is composed of three subunits; BchL, BchN and BchB. Forms a heterotetramer of two BchB and two BchN subunits. [4Fe-4S] cluster is required as a cofactor.

The catalysed reaction is chlorophyllide a + oxidized 2[4Fe-4S]-[ferredoxin] + 2 ADP + 2 phosphate = protochlorophyllide a + reduced 2[4Fe-4S]-[ferredoxin] + 2 ATP + 2 H2O. The protein operates within porphyrin-containing compound metabolism; bacteriochlorophyll biosynthesis (light-independent). Its function is as follows. Component of the dark-operative protochlorophyllide reductase (DPOR) that uses Mg-ATP and reduced ferredoxin to reduce ring D of protochlorophyllide (Pchlide) to form chlorophyllide a (Chlide). This reaction is light-independent. The NB-protein (BchN-BchB) is the catalytic component of the complex. The sequence is that of Light-independent protochlorophyllide reductase subunit B from Bradyrhizobium sp. (strain ORS 278).